The chain runs to 65 residues: Large ribosomal subunit protein bL35 (65 aa).

The interval 1–26 (MPKMKSNKGASKRFKKTASGGFKCKQ) is disordered.

Belongs to the bacterial ribosomal protein bL35 family.

This chain is Large ribosomal subunit protein bL35, found in Idiomarina loihiensis (strain ATCC BAA-735 / DSM 15497 / L2-TR).